The primary structure comprises 545 residues: Glutamyl-tRNA(Gln) amidotransferase subunit B-1, chloroplastic/mitochondrial (545 aa).

The protein belongs to the GatB/GatE family. GatB subfamily. Subunit of the heterotrimeric GatCAB amidotransferase (AdT) complex, composed of A, B and C subunits.

Its subcellular location is the mitochondrion. It localises to the plastid. The protein localises to the chloroplast. It catalyses the reaction L-glutamyl-tRNA(Gln) + L-glutamine + ATP + H2O = L-glutaminyl-tRNA(Gln) + L-glutamate + ADP + phosphate + H(+). Functionally, allows the formation of correctly charged Gln-tRNA(Gln) through the transamidation of misacylated Glu-tRNA(Gln) in chloroplasts and mitochondria. The reaction takes place in the presence of glutamine and ATP through an activated gamma-phospho-Glu-tRNA(Gln). The sequence is that of Glutamyl-tRNA(Gln) amidotransferase subunit B-1, chloroplastic/mitochondrial from Micromonas pusilla (strain CCMP1545) (Picoplanktonic green alga).